A 189-amino-acid polypeptide reads, in one-letter code: MSSRGVRAAGTDGTDFQNRQRVAQHYQESAQYKSILKWFFVPHFLILVFMWLKVGSELLRTNFGWKNAFFDRLDMPSAYPWEYVWCFSFIPIVLAIYSFQRNKLKILHYAYYAEFVVGIFPCMIGLGGQLPELMEYAQDMEGSNTPTFKGIFPMVIIWYIFFAVALQIHGFSMYFMHHLAAAWAPVKRD.

Topologically, residues 1-34 are cytoplasmic; that stretch reads MSSRGVRAAGTDGTDFQNRQRVAQHYQESAQYKS. Residues 35–55 form a helical membrane-spanning segment; it reads ILKWFFVPHFLILVFMWLKVG. The Lumenal segment spans residues 56–78; that stretch reads SELLRTNFGWKNAFFDRLDMPSA. The helical transmembrane segment at 79–99 threads the bilayer; it reads YPWEYVWCFSFIPIVLAIYSF. Topologically, residues 100–105 are cytoplasmic; sequence QRNKLK. The chain crosses the membrane as a helical span at residues 106 to 126; that stretch reads ILHYAYYAEFVVGIFPCMIGL. Residues 127–150 are Lumenal-facing; it reads GGQLPELMEYAQDMEGSNTPTFKG. The helical transmembrane segment at 151–171 threads the bilayer; the sequence is IFPMVIIWYIFFAVALQIHGF. Residues 172-189 lie on the Cytoplasmic side of the membrane; the sequence is SMYFMHHLAAAWAPVKRD.

Belongs to the jagunal family.

The protein resides in the endoplasmic reticulum membrane. The polypeptide is Protein jagunal homolog (Caenorhabditis elegans).